Here is a 104-residue protein sequence, read N- to C-terminus: SGSSPSSNSNYCNVMMFCRKMTQGKCKPVNTFAHEFLADVQAVCSQKKVTCKNGQTNCYQSNSAMSITDCRQTGSSKYPNCAYKTTQAQKHIIVACEGNPYVPV.

4 disulfide bridges follow: Cys12–Cys70, Cys26–Cys81, Cys44–Cys96, and Cys51–Cys58. Substrate contacts are provided by residues 27–31, Lys52, and Arg71; that span reads KPVNT.

The protein belongs to the pancreatic ribonuclease family. In terms of assembly, homodimer; disulfide-linked.

It localises to the secreted. It carries out the reaction an [RNA] containing cytidine + H2O = an [RNA]-3'-cytidine-3'-phosphate + a 5'-hydroxy-ribonucleotide-3'-[RNA].. The catalysed reaction is an [RNA] containing uridine + H2O = an [RNA]-3'-uridine-3'-phosphate + a 5'-hydroxy-ribonucleotide-3'-[RNA].. The chain is Seminal ribonuclease (SRN) from Saiga tatarica (Saiga antelope).